A 91-amino-acid chain; its full sequence is Cell division topological specificity factor (91 aa).

Belongs to the MinE family.

Its function is as follows. Prevents the cell division inhibition by proteins MinC and MinD at internal division sites while permitting inhibition at polar sites. This ensures cell division at the proper site by restricting the formation of a division septum at the midpoint of the long axis of the cell. The polypeptide is Cell division topological specificity factor (Gloeobacter violaceus (strain ATCC 29082 / PCC 7421)).